We begin with the raw amino-acid sequence, 250 residues long: Proteasome subunit alpha type-7-A (250 aa).

Lysine 62 is covalently cross-linked (Glycyl lysine isopeptide (Lys-Gly) (interchain with G-Cter in ubiquitin)).

The protein belongs to the peptidase T1A family. Component of the 20S core complex of the 26S proteasome. The 26S proteasome is composed of a core protease (CP), known as the 20S proteasome, capped at one or both ends by the 19S regulatory particle (RP/PA700). The 20S proteasome core is composed of 28 subunits that are arranged in four stacked rings, resulting in a barrel-shaped structure. The two end rings are each formed by seven alpha subunits, and the two central rings are each formed by seven beta subunits. The catalytic chamber with the active sites is on the inside of the barrel. Interacts with KIN10 and KIN11 SnRK subunits, and with the SKP1A/ASK1 subunit of the SCF E3 ubiquitin ligase complex. As to expression, expressed in roots, leaves and flowers.

It is found in the cytoplasm. The protein localises to the nucleus. The proteasome is a multicatalytic proteinase complex which is characterized by its ability to cleave peptides with Arg, Phe, Tyr, Leu, and Glu adjacent to the leaving group at neutral or slightly basic pH. The proteasome has an ATP-dependent proteolytic activity. Mediates the association of the SCF(TIR1) E3 ubiquitin ligase complex with the proteasome. In Arabidopsis thaliana (Mouse-ear cress), this protein is Proteasome subunit alpha type-7-A (PAD1).